The primary structure comprises 538 residues: MAGELKVLNALDSAKTQWYHFTAIVIAGMGFFTDAYDLFSISLVTKLLGRIYYFNPASKSPGSLPPNVSAAVNGVAFCGTLAGQLFFGWLGDKMGRKKVYGMTLMLMVICCLASGLSFGSSAKGVMATLCFFRFWLGFGIGGDYPLSATIMSEYANKRTRGAFIAAVFAMQGFGNLTGGIVAIIVSAAFKSRFDAPAYRDDRTGSTVPQADYAWRIVLMFGAIPALLTYYWRMKMPETARYTALVAKNAKQAAADMTQVLNVEIVEEQEKADEVARREQFGLFSRQFLRRHGRHLLGTTVCWFVLDIAFYSSNLFQKDIYTAVQWLPKADTMSALEEMFKISRAQTLVALCGTIPGYWFTVFFIDIIGRFVIQLGGFFFMTAFMLGLAVPYHHWTTPGNHIGFVVMYAFTFFFANFGPNSTTFIVPAEIFPARLRSTCHGISAAAGKAGAIVGSFGFLYAAQSTDASKTDAGYPPGIGVRNSLFFLAGCNVIGFFFTFLVPESKGKSLEELSGENEDDDDVPEAPATADHRTAPAPPA.

Residues 1–23 (MAGELKVLNALDSAKTQWYHFTA) are Cytoplasmic-facing. The helical transmembrane segment at 24-44 (IVIAGMGFFTDAYDLFSISLV) threads the bilayer. The Extracellular segment spans residues 45–69 (TKLLGRIYYFNPASKSPGSLPPNVS). A helical transmembrane segment spans residues 70–90 (AAVNGVAFCGTLAGQLFFGWL). Residues 91 to 98 (GDKMGRKK) are Cytoplasmic-facing. A helical membrane pass occupies residues 99 to 119 (VYGMTLMLMVICCLASGLSFG). The Extracellular portion of the chain corresponds to 120–123 (SSAK). A helical transmembrane segment spans residues 124-144 (GVMATLCFFRFWLGFGIGGDY). The Cytoplasmic segment spans residues 145 to 163 (PLSATIMSEYANKRTRGAF). Residues 164–184 (IAAVFAMQGFGNLTGGIVAII) traverse the membrane as a helical segment. Residues 185–210 (VSAAFKSRFDAPAYRDDRTGSTVPQA) lie on the Extracellular side of the membrane. The helical transmembrane segment at 211–231 (DYAWRIVLMFGAIPALLTYYW) threads the bilayer. The Cytoplasmic segment spans residues 232-294 (RMKMPETARY…RQFLRRHGRH (63 aa)). A helical transmembrane segment spans residues 295 to 315 (LLGTTVCWFVLDIAFYSSNLF). The Extracellular portion of the chain corresponds to 316 to 346 (QKDIYTAVQWLPKADTMSALEEMFKISRAQT). A helical membrane pass occupies residues 347-367 (LVALCGTIPGYWFTVFFIDII). The Cytoplasmic portion of the chain corresponds to 368 to 369 (GR). The chain crosses the membrane as a helical span at residues 370 to 390 (FVIQLGGFFFMTAFMLGLAVP). Residues 391–396 (YHHWTT) are Extracellular-facing. A helical transmembrane segment spans residues 397 to 417 (PGNHIGFVVMYAFTFFFANFG). Residues 418–440 (PNSTTFIVPAEIFPARLRSTCHG) are Cytoplasmic-facing. The chain crosses the membrane as a helical span at residues 441 to 461 (ISAAAGKAGAIVGSFGFLYAA). Residues 462-481 (QSTDASKTDAGYPPGIGVRN) are Extracellular-facing. A helical transmembrane segment spans residues 482–502 (SLFFLAGCNVIGFFFTFLVPE). Topologically, residues 503–538 (SKGKSLEELSGENEDDDDVPEAPATADHRTAPAPPA) are cytoplasmic. The tract at residues 507–538 (SLEELSGENEDDDDVPEAPATADHRTAPAPPA) is disordered. Over residues 511-522 (LSGENEDDDDVP) the composition is skewed to acidic residues.

This sequence belongs to the major facilitator superfamily. Phosphate:H(+) symporter (TC 2.A.1.9) family. Expressed at low levels in roots.

It localises to the membrane. High-affinity transporter for external inorganic phosphate. In Oryza sativa subsp. japonica (Rice), this protein is Probable inorganic phosphate transporter 1-4 (PHT1-4).